Here is a 305-residue protein sequence, read N- to C-terminus: MYNGILPVYKERGLTSHDVVFKLRKILKTKKIGHTGTLDPEVAGVLPVCIGNATRVSDYVMDMGKAYEATVSIGRSTTTEDQTGDTLETKGVHSADFNKDDIDRLLESFKGIIEQIPPMYSSVKVNGKKLYEYARNNETVERPKRKVNIKDIGRISELDFKENECHFKIRVICGKGTYIRTLATDIGVKLGFPAHMSKLTRIESGGFVLKDSLTLEQIKELHEQDSLQNKLFPLEYGLKGLPSIKIKDSHIKKRILNGQKFNKNEFDNKIKDQIVFIDGDSEKVLAIYMVHPTKESEIKPKKVFN.

The active-site Nucleophile is the aspartate 39.

Belongs to the pseudouridine synthase TruB family. Type 1 subfamily.

The enzyme catalyses uridine(55) in tRNA = pseudouridine(55) in tRNA. Functionally, responsible for synthesis of pseudouridine from uracil-55 in the psi GC loop of transfer RNAs. This chain is tRNA pseudouridine synthase B, found in Staphylococcus aureus (strain MW2).